The chain runs to 435 residues: Adenylosuccinate lyase (435 aa).

N(6)-(1,2-dicarboxyethyl)-AMP contacts are provided by residues 4–5 (RY), 73–75 (RHD), and 99–100 (TS). The active-site Proton donor/acceptor is the His-147. Gln-218 provides a ligand contact to N(6)-(1,2-dicarboxyethyl)-AMP. Catalysis depends on Ser-268, which acts as the Proton donor/acceptor. Residues Ser-269, 274 to 276 (KKN), Asn-282, and 313 to 317 (SAERV) contribute to the N(6)-(1,2-dicarboxyethyl)-AMP site.

This sequence belongs to the lyase 1 family. Adenylosuccinate lyase subfamily. As to quaternary structure, homotetramer. Residues from neighboring subunits contribute catalytic and substrate-binding residues to each active site.

The enzyme catalyses N(6)-(1,2-dicarboxyethyl)-AMP = fumarate + AMP. The catalysed reaction is (2S)-2-[5-amino-1-(5-phospho-beta-D-ribosyl)imidazole-4-carboxamido]succinate = 5-amino-1-(5-phospho-beta-D-ribosyl)imidazole-4-carboxamide + fumarate. Its pathway is purine metabolism; AMP biosynthesis via de novo pathway; AMP from IMP: step 2/2. It functions in the pathway purine metabolism; IMP biosynthesis via de novo pathway; 5-amino-1-(5-phospho-D-ribosyl)imidazole-4-carboxamide from 5-amino-1-(5-phospho-D-ribosyl)imidazole-4-carboxylate: step 2/2. In terms of biological role, catalyzes two reactions in de novo purine nucleotide biosynthesis. Catalyzes the breakdown of 5-aminoimidazole- (N-succinylocarboxamide) ribotide (SAICAR or 2-[5-amino-1-(5-phospho-beta-D-ribosyl)imidazole-4-carboxamido]succinate) to 5-aminoimidazole-4-carboxamide ribotide (AICAR or 5-amino-1-(5-phospho-beta-D-ribosyl)imidazole-4-carboxamide) and fumarate, and of adenylosuccinate (ADS or N(6)-(1,2-dicarboxyethyl)-AMP) to adenosine monophosphate (AMP) and fumarate. The protein is Adenylosuccinate lyase (purB) of Deinococcus radiodurans (strain ATCC 13939 / DSM 20539 / JCM 16871 / CCUG 27074 / LMG 4051 / NBRC 15346 / NCIMB 9279 / VKM B-1422 / R1).